Here is a 204-residue protein sequence, read N- to C-terminus: Twist-related protein 1 (204 aa).

Residues 1 to 18 (MMQDVSSSPVSPADDSLS) show a composition bias toward low complexity. The segment at 1–107 (MMQDVSSSPV…GGGSPQSYEE (107 aa)) is disordered. The span at 34 to 43 (RGGRKRRSSR) shows a compositional bias: basic residues. Composition is skewed to gly residues over residues 46–65 (AGGG…GGDE) and 80–101 (GCGG…GGGS). The region spanning 110–161 (TQRVMANVRERQRTQSLNEAFAALRKIIPTLPSDKLSKIQTLKLAARYIDFL) is the bHLH domain. The interval 163–193 (QVLQSDELDSKMASCSYVAHERFSYAFSVWR) is sufficient for transactivation activity.

Efficient DNA binding requires dimerization with another bHLH protein. Homodimer or heterodimer with E proteins such as TCF3. ID1 binds preferentially to TCF3 but does not interact efficiently with TWIST1 so ID1 levels control the amount of TCF3 available to dimerize with TWIST and thus determine the type of dimer formed.

It localises to the nucleus. Acts as a transcriptional regulator. Inhibits myogenesis by sequestrating E proteins, inhibiting trans-activation by MEF2, and inhibiting DNA-binding by MYOD1 through physical interaction. This interaction probably involves the basic domains of both proteins. Also represses expression of pro-inflammatory cytokines such as TNFA and IL1B. Regulates cranial suture patterning and fusion. Activates transcription as a heterodimer with E proteins. Regulates gene expression differentially, depending on dimer composition. Homodimers induce expression of FGFR2 and POSTN while heterodimers repress FGFR2 and POSTN expression and induce THBS1 expression. Heterodimerization is also required for osteoblast differentiation. Represses the activity of the circadian transcriptional activator: NPAS2-BMAL1 heterodimer. The sequence is that of Twist-related protein 1 (TWIST1) from Nomascus concolor (Black crested gibbon).